A 240-amino-acid chain; its full sequence is Peptidyl-tRNA hydrolase 2 (240 aa).

A tRNA-binding site is contributed by Tyr60. His65 acts as the Proton acceptor in catalysis. TRNA-binding residues include Tyr111, Asn113, and Asn159.

The protein belongs to the PTH family. As to quaternary structure, monomer.

The protein resides in the cytoplasm. It catalyses the reaction an N-acyl-L-alpha-aminoacyl-tRNA + H2O = an N-acyl-L-amino acid + a tRNA + H(+). Functionally, hydrolyzes ribosome-free peptidyl-tRNAs (with 1 or more amino acids incorporated), which drop off the ribosome during protein synthesis, or as a result of ribosome stalling. In terms of biological role, catalyzes the release of premature peptidyl moieties from peptidyl-tRNA molecules trapped in stalled 50S ribosomal subunits, and thus maintains levels of free tRNAs and 50S ribosomes. This Corynebacterium jeikeium (strain K411) protein is Peptidyl-tRNA hydrolase 2.